A 619-amino-acid polypeptide reads, in one-letter code: Protein CPn_1016/CP_0837/CPj1016/CpB1054 (619 aa).

The segment at 591 to 619 (NAKKSEEQTSPQETPEVIRVSYPTTTSAL) is disordered.

Belongs to the chlamydial CPn_1016/CT_858/TC_0248 family.

The chain is Protein CPn_1016/CP_0837/CPj1016/CpB1054 from Chlamydia pneumoniae (Chlamydophila pneumoniae).